A 457-amino-acid chain; its full sequence is Multidrug resistance protein MdtK (457 aa).

12 consecutive transmembrane segments (helical) span residues 11 to 31 (LLAL…MGFV), 53 to 73 (IWLP…PVIA), 93 to 113 (WLAG…GYII), 127 to 147 (AVGY…FQVA), 160 to 180 (GMVI…IFIY), 188 to 208 (LGGV…FIAM), 243 to 263 (LPIA…ALLV), 276 to 296 (IALN…AAVT), 314 to 334 (AART…IFTV), 357 to 377 (LMLL…GSGI), 387 to 407 (IFFI…YILA), and 418 to 438 (PAGF…MMML).

The protein belongs to the multi antimicrobial extrusion (MATE) (TC 2.A.66.1) family. MdtK subfamily.

Its subcellular location is the cell inner membrane. Functionally, multidrug efflux pump that functions probably as a Na(+)/drug antiporter. The chain is Multidrug resistance protein MdtK from Citrobacter koseri (strain ATCC BAA-895 / CDC 4225-83 / SGSC4696).